The following is a 261-amino-acid chain: uncharacterized protein (261 aa).

The stretch at 16 to 147 (KQTSLVLQNL…QTNVNVLRSQ (132 aa)) forms a coiled coil.

The protein resides in the cytoplasm. This is an uncharacterized protein from Schizosaccharomyces pombe (strain 972 / ATCC 24843) (Fission yeast).